A 70-amino-acid chain; its full sequence is Small ribosomal subunit protein bS21 (70 aa).

The protein belongs to the bacterial ribosomal protein bS21 family.

The chain is Small ribosomal subunit protein bS21 from Campylobacter curvus (strain 525.92).